Consider the following 2873-residue polypeptide: MSTSDINKTIALLQSSKIKERNDALNNLENIAASKFRLNPKQFRQLTQAILALIKHESQIYFNNKSTTVDSRLSQASYNLRLLTEKSIEDTRIDFKYRTYLDLCMGIKDQFFVHSELLEPCSIDFIKTITSILNLSYVKEHLNRKEWSILYIFLVSLINNILDDCEGSFSNNGNNEKLLIDLYTALQNLLQCESSVSINYLQLYDNDNYFKLLRILDKTSELLKKENVIIIIIFRIINKLITVIATEKFKFVNKLIKIGIRLMVYFHHSHWEKLQEQFLIFINLPGTHDLINLHNLPKLIGDRYILSEISTQEDGDSINSQADNQDEVFLYNLGVLIHHLMKKLMSGSFELKTEDIGMCTINNSITWFNLKTIYSDSQNYKPWLLTLGVSRLLKSYYDLKQFINKQSNDPQTSLLLYSNGSPNKNKRQKLGSIADTISDSNSAIELCNKLIHSKESSDNQVLGLKLLTFYLELYTFEKPKEQSTESDSMDTTIGENTTFDFVISTTDNTFIDKNVVMKNILITFDDNSMNFWSSLCARSVLLDEILQSNHGGFKFKKSFSIQLLKLSLLLLKEPEVANIACNIIFKLVFEQKTNLSELIDDSVIIQLETLIDLSEINGPYKITEESFQFWYAINKLAIEVNLSKKNFLGRRIQDWMLAKWDITFSPGADFVSVGSSLANFIYWLSGNSISYSPTTTQKSTYEGDIYEFYYFAQSYDSLEKFLCLKSVSDSSETIKFDIISIASSDRIDAILNKVNSTFMVFDRSSVTSGSLFCWIIVLSNIVAKVRSMKFVTHELTGLQFQLSAGLNSFKDITLSCEEIIDVMEMVNKFLPTDPDTIQIFIQNFPSEKLVNIIKFDYPGLADKDNRKSVPEDGFGWEFSRVRDATTPPSTTSTSTISLAKLNYKKIQSLEVSKFIMFTADIEGKLQSDILTAFLNYVETLESDDFLPSLLFVVENIFTDHSAHFIDEIQLAKLLRIINEKLLSTQNYERNEFVSVVISRFLSATAQVWINSSDNSLASDFYSLVSRLYSSGRDDLILTETSIVEYCRFLAHFITHNDERVLSNTDIKNELLEKFSKSPNNIKDRLANSFGELVSLSTVQQQGQIYSDLFDRFVNPEQSVESAGTYTKFFTNLSQSSLHILRLALFNLLECSRFPFFISYLEICLKEFCMIMKLDNANKLFKIFKFEILRNWWKYDSIDAFPFVLFSYTDLSSFYRDNYRELIAVALSTKSRSPEISNAFVEQLADLKQSHSETLVAESLSIIVPLSYSKDGVRNDVFQILLDYLKNSFKQEFIDKLPLIVLEIIKFTEISNEKSFESLGTDGLVTMLLNDTGFSSTIQTAGEMVISFDSSVQLLKKLVEKYHQPEHETFWSSRQIYFLIRRLSISLKLATTFEQKVIFLRKFKFVLVLGGKKSIDYAVSRLLVDTLCPLLSNEPKMSADVFLILQSLTDVYSHRYTYDKSISLIIQIINSLLETEAVDRSRALLDCIDDFVNTGDQDRAICQLLKSSVAILKGQAVEIESSLIELCLEESGPDYIKQMILISRIFGNVVFATTHSGSKLPVVEKLLALSKNQIQEFSDGYKLWIANYLSDFYIEGGCKEQIKALTFDEYEGIPVNDFENEVRSFDFTLKSIEQYIYKDDFEAAACAESIIGVLIRKYETSKREVSKFLNFETTLEKHSDSILPIDFHTCVILNDKADVEYLGDELIDIINNFESFLSNGTELWCTKLYLALLQELAVETSIAPLLSTFVIMVPEFAKTSLPVLVCNYLAIKRTHSQDRIISLLNEFLHTSKKSESSIKVFLQILILIRVGAKIFKKPVFANVFAKIDKLKFYQLACEVKQFKTALMLFEDVASDTNSDVHLQDHYQTLQHVYESLDDDDLVFGLPERTTLEYSISMINRVGNSDDRLRFSSAGFDTDMILNQEPSYSNIVGSLSAAGLLGVSRALSKNTSFASNDDSQYEWSWKLSKWDLPISKNATKENEVIYKTLKQIHDFPMNSQDICSSSLLNAVDNKVSATNMSVKEFKQEGINWLKTISTVASIAEIANATGDNIIPMTNQFSEKTQWFGEVEFSMFENLLLARQTTFGLINDRPISSLPSDTAWMGALCDLVRYNNLARTNGEYQKMVTSTMLVDVVSKKLQSSSLDMVAFNANNLASFQTAQTLWCQGNTNVPVMIMKDLYAAGGIDMSENILKVDKCLIRAMMVDWMSQSRQEVASSIMEKYVMPTEELSNHMIDLQQQSKIFSILARFCEEQYKFKSLSEKISKLEKRVLNKENEIKDLKKQYEKVTVTHAEQKQVQQYYNRLKKQFVSESKDLESLRKSKQLFSSKAVQYYMKSIIVDDFEEENLDKFFSLWLEQSGNNELNQSIQSNLLALPSYKLVSWCTQLISRLSNETNNFQILLKKLIINMCLDHPHHSLYLLLSLKKHKPNTNEVLNPSLLSRCAAAQAIWDQLLLQDHRYISDVLLPIDGFTDQCITLAAYKVSKGKSIDLTKFSAGDYWLNELPAIPPPTETIRVDPSKQYKNVPVLHSIDKKISIATSGLSLPKIANFILSNGTEHRVLLKHGTDGIRQDSIMEQVFNKVNNIFAKDRECNKRGLTIRTYNAVPLGPLSGIIEFVPNSMAFIDVISGYHQMHDKISYDKAREMMKSCQSGDKQKRIHSFEQIEAKIKPVMRYFFQETFLTSDSWFESRVKYTHGIATSSIVGHILGLGDRHCNNILIDRSTGEPIHIDLGVAFDQGKRLAIPETVPFRLTRDIVDGFGVTGVEGMFKKSCEHTLRVLRTNKEHIISILDVLRWDPLYSWTLSRFKKRKLQEDETGPGVQPEEEGSEAGTAIMTVIEKLNANGLSTEAAVRELIQEATSTQNLALIYFGWSPFY.

In terms of domain architecture, FAT spans 1830 to 2425 (KFYQLACEVK…LYLLLSLKKH (596 aa)). Residues 2530–2839 (DKKISIATSG…AIMTVIEKLN (310 aa)) form the PI3K/PI4K catalytic domain. The G-loop stretch occupies residues 2536-2542 (ATSGLSL). A catalytic loop region spans residues 2706-2714 (GLGDRHCNN). Positions 2726–2750 (HIDLGVAFDQGKRLAIPETVPFRLT) are activation loop. The 33-residue stretch at 2841–2873 (NGLSTEAAVRELIQEATSTQNLALIYFGWSPFY) folds into the FATC domain.

The protein belongs to the PI3/PI4-kinase family. ATM subfamily. In terms of assembly, associates with DNA double-strand breaks.

It localises to the nucleus. The protein localises to the chromosome. It is found in the telomere. It carries out the reaction L-seryl-[protein] + ATP = O-phospho-L-seryl-[protein] + ADP + H(+). The enzyme catalyses L-threonyl-[protein] + ATP = O-phospho-L-threonyl-[protein] + ADP + H(+). Functionally, serine/threonine protein kinase which activates checkpoint signaling upon genotoxic stresses such as ionizing radiation (IR), ultraviolet light (UV), or DNA replication stalling, thereby acting as a DNA damage sensor. Recognizes the substrate consensus sequence [ST]-Q. Phosphorylates histone H2A to form H2AS128ph (gamma-H2A) at sites of DNA damage, involved in the regulation of DNA damage response mechanism. Required for the control of telomere length and genome stability. In Candida albicans (strain SC5314 / ATCC MYA-2876) (Yeast), this protein is Serine/threonine-protein kinase TEL1 (TEL1).